Here is a 127-residue protein sequence, read N- to C-terminus: MNIPEDLRYTKDHEWVKLLDDGSTALAGITDFAQSELGDIVFVELKAPGTKLKAHEVFGTVEAVKTVADLFAPIAGELVGINEALDAAEVVNTDPYGEGWLVKIKVDDAKAVEELLDAASYRQLIGA.

A Lipoyl-binding domain is found at 24 to 105 (TALAGITDFA…YGEGWLVKIK (82 aa)). The residue at position 65 (K65) is an N6-lipoyllysine.

It belongs to the GcvH family. In terms of assembly, the glycine cleavage system is composed of four proteins: P, T, L and H. It depends on (R)-lipoate as a cofactor.

The glycine cleavage system catalyzes the degradation of glycine. The H protein shuttles the methylamine group of glycine from the P protein to the T protein. In Chlorobium phaeobacteroides (strain DSM 266 / SMG 266 / 2430), this protein is Glycine cleavage system H protein.